We begin with the raw amino-acid sequence, 223 residues long: MRARRLVMLRHGQTDYNVGSRMQGQLDTELSELGRTQAVAAAEVLGKRQPLLIVSSDLRRAYDTAVKLGERTGLVVRVDTRLRETHLGDWQGLTHAQIDADAPGARLAWREDATWAPHGGESRVDVAARSRPLVAELVASEPEWGGADEPDRPVVLVAHGGLIAALSAALLKLPVANWPALGGMGNASWTQLSGHWAPGSDFESIRWRLDVWNASAQVSSDVL.

R10 lines the substrate pocket. The Tele-phosphohistidine intermediate role is filled by H11. Residue K47 forms an Isoglutamyl lysine isopeptide (Lys-Gln) (interchain with Q-Cter in protein Pup) linkage. R60 provides a ligand contact to substrate. E84 (proton donor/acceptor) is an active-site residue. H159 contributes to the substrate binding site.

It belongs to the phosphoglycerate mutase family. In terms of assembly, homodimer. Dimerization of the enzyme is essential for its dephosphorylation activity.

The enzyme catalyses (2R)-2-O-(alpha-D-glucopyranosyl)-3-phospho-glycerate + H2O = (2R)-2-O-(alpha-D-glucopyranosyl)-glycerate + phosphate. It carries out the reaction 2-O-(alpha-D-mannosyl)-3-phosphoglycerate + H2O = (2R)-2-O-(alpha-D-mannosyl)-glycerate + phosphate. It catalyses the reaction (2R)-2-O-[alpha-D-mannopyranosyl-(1-&gt;2)-alpha-D-glucopyranosyl]-3-phospho-glycerate + H2O = (2R)-2-O-[alpha-D-mannopyranosyl-(1-&gt;2)-alpha-D-glucopyranosyl]-glycerate + phosphate. With respect to regulation, progressively inhibited by cobalt ions at concentrations between 10-50 mM and by copper ions at any concentration between 1-50 mM. Functionally, involved in the biosynthesis of mycobacterial methylglucose lipopolysaccharides (MGLPs). Catalyzes the dephosphorylation of glucosyl-3-phosphoglycerate (GPG) to glucosylglycerate (GG). GPG is the preferred substrate, but GpgP also exhibits low dephosphorylation activity on mannosyl-3-phosphoglycerate (MPG) and mannosylglucosyl-3-phosphoglycerate (MGPG) in vitro. Shows only trace of phosphoglycerate mutase (PGM) activity. The sequence is that of Glucosyl-3-phosphoglycerate phosphatase from Mycobacterium tuberculosis (strain ATCC 25618 / H37Rv).